Consider the following 120-residue polypeptide: Small ribosomal subunit protein eS24 (120 aa).

The interval 101 to 120 is disordered; that stretch reads RDAGTKQKKGGSKGGQGAKG.

This sequence belongs to the eukaryotic ribosomal protein eS24 family.

This Saccharolobus islandicus (strain Y.N.15.51 / Yellowstone #2) (Sulfolobus islandicus) protein is Small ribosomal subunit protein eS24.